We begin with the raw amino-acid sequence, 353 residues long: DNA polymerase IV (353 aa).

The UmuC domain maps to 14–198 (IIHIDMDAFF…MDISKFHGVG (185 aa)). Residues Asp18 and Asp116 each contribute to the Mg(2+) site. Residue Glu117 is part of the active site.

It belongs to the DNA polymerase type-Y family. In terms of assembly, monomer. It depends on Mg(2+) as a cofactor.

Its subcellular location is the cytoplasm. It catalyses the reaction DNA(n) + a 2'-deoxyribonucleoside 5'-triphosphate = DNA(n+1) + diphosphate. In terms of biological role, poorly processive, error-prone DNA polymerase involved in untargeted mutagenesis. Copies undamaged DNA at stalled replication forks, which arise in vivo from mismatched or misaligned primer ends. These misaligned primers can be extended by PolIV. Exhibits no 3'-5' exonuclease (proofreading) activity. May be involved in translesional synthesis, in conjunction with the beta clamp from PolIII. The sequence is that of DNA polymerase IV from Streptococcus pneumoniae serotype 4 (strain ATCC BAA-334 / TIGR4).